The chain runs to 829 residues: Probable receptor-like protein kinase At5g59700 (829 aa).

The signal sequence occupies residues 1 to 24; the sequence is MGGEKFGFLIWILSIPCLIFLCYG. The Extracellular segment spans residues 25-406; that stretch reads YVPVDNYLIN…SSTTKKNVGM (382 aa). N-linked (GlcNAc...) asparagine glycosylation is found at asparagine 40, asparagine 216, asparagine 279, and asparagine 380. The helical transmembrane segment at 407–427 threads the bilayer; it reads IIGLTIGSLLALVVLGGFFVL. Residues 428–829 lie on the Cytoplasmic side of the membrane; the sequence is YKKRGRDQDG…FSQLIKSEGR (402 aa). The 274-residue stretch at 482 to 755 folds into the Protein kinase domain; the sequence is FDENRAIGVG…GDVLWNLEYA (274 aa). ATP is bound by residues 488–496 and lysine 510; that span reads IGVGGFGKV. Residue aspartate 606 is the Proton acceptor of the active site.

Belongs to the protein kinase superfamily. Ser/Thr protein kinase family.

The protein resides in the cell membrane. The sequence is that of Probable receptor-like protein kinase At5g59700 from Arabidopsis thaliana (Mouse-ear cress).